The sequence spans 132 residues: Large ribosomal subunit protein uL22c (132 aa).

It belongs to the universal ribosomal protein uL22 family. Part of the 50S ribosomal subunit.

It is found in the plastid. Its subcellular location is the chloroplast. Functionally, this protein binds specifically to 23S rRNA. In terms of biological role, the globular domain of the protein is located near the polypeptide exit tunnel on the outside of the subunit, while an extended beta-hairpin is found that lines the wall of the exit tunnel in the center of the 70S ribosome. The polypeptide is Large ribosomal subunit protein uL22c (rpl22) (Staurastrum punctulatum (Green alga)).